We begin with the raw amino-acid sequence, 188 residues long: ATP synthase subunit delta (188 aa).

The protein belongs to the ATPase delta chain family. In terms of assembly, F-type ATPases have 2 components, F(1) - the catalytic core - and F(0) - the membrane proton channel. F(1) has five subunits: alpha(3), beta(3), gamma(1), delta(1), epsilon(1). F(0) has three main subunits: a(1), b(2) and c(10-14). The alpha and beta chains form an alternating ring which encloses part of the gamma chain. F(1) is attached to F(0) by a central stalk formed by the gamma and epsilon chains, while a peripheral stalk is formed by the delta and b chains.

The protein resides in the cell inner membrane. F(1)F(0) ATP synthase produces ATP from ADP in the presence of a proton or sodium gradient. F-type ATPases consist of two structural domains, F(1) containing the extramembraneous catalytic core and F(0) containing the membrane proton channel, linked together by a central stalk and a peripheral stalk. During catalysis, ATP synthesis in the catalytic domain of F(1) is coupled via a rotary mechanism of the central stalk subunits to proton translocation. In terms of biological role, this protein is part of the stalk that links CF(0) to CF(1). It either transmits conformational changes from CF(0) to CF(1) or is implicated in proton conduction. This Rhizobium etli (strain CIAT 652) protein is ATP synthase subunit delta.